A 182-amino-acid polypeptide reads, in one-letter code: ATP-dependent protease subunit HslV (182 aa).

The active site involves threonine 12. Positions 167, 170, and 173 each coordinate Na(+).

It belongs to the peptidase T1B family. HslV subfamily. A double ring-shaped homohexamer of HslV is capped on each side by a ring-shaped HslU homohexamer. The assembly of the HslU/HslV complex is dependent on binding of ATP.

The protein resides in the cytoplasm. The catalysed reaction is ATP-dependent cleavage of peptide bonds with broad specificity.. With respect to regulation, allosterically activated by HslU binding. Functionally, protease subunit of a proteasome-like degradation complex believed to be a general protein degrading machinery. This chain is ATP-dependent protease subunit HslV, found in Acidiphilium cryptum (strain JF-5).